The following is a 311-amino-acid chain: Bifunctional protein FolD (311 aa).

Residue Gly174 to Gly176 participates in NADP(+) binding.

Belongs to the tetrahydrofolate dehydrogenase/cyclohydrolase family. In terms of assembly, homodimer.

It catalyses the reaction (6R)-5,10-methylene-5,6,7,8-tetrahydrofolate + NADP(+) = (6R)-5,10-methenyltetrahydrofolate + NADPH. It carries out the reaction (6R)-5,10-methenyltetrahydrofolate + H2O = (6R)-10-formyltetrahydrofolate + H(+). Its pathway is one-carbon metabolism; tetrahydrofolate interconversion. Functionally, catalyzes the oxidation of 5,10-methylenetetrahydrofolate to 5,10-methenyltetrahydrofolate and then the hydrolysis of 5,10-methenyltetrahydrofolate to 10-formyltetrahydrofolate. The protein is Bifunctional protein FolD of Pyrobaculum islandicum (strain DSM 4184 / JCM 9189 / GEO3).